The chain runs to 173 residues: Acireductone dioxygenase (173 aa).

The segment at 1-21 (MKFYYHDNDSSVDQCAPHDSG) is disordered. 4 residues coordinate Fe(2+): His-84, His-86, Glu-90, and His-129. Ni(2+)-binding residues include His-84, His-86, Glu-90, and His-129.

This sequence belongs to the acireductone dioxygenase (ARD) family. Requires Fe(2+) as cofactor. Ni(2+) serves as cofactor.

The protein resides in the cytoplasm. The protein localises to the nucleus. It carries out the reaction 1,2-dihydroxy-5-(methylsulfanyl)pent-1-en-3-one + O2 = 4-methylsulfanyl-2-oxobutanoate + formate + 2 H(+). The catalysed reaction is 1,2-dihydroxy-5-(methylsulfanyl)pent-1-en-3-one + O2 = 3-(methylsulfanyl)propanoate + CO + formate + 2 H(+). It participates in amino-acid biosynthesis; L-methionine biosynthesis via salvage pathway; L-methionine from S-methyl-5-thio-alpha-D-ribose 1-phosphate: step 5/6. Functionally, catalyzes 2 different reactions between oxygen and the acireductone 1,2-dihydroxy-3-keto-5-methylthiopentene (DHK-MTPene) depending upon the metal bound in the active site. Fe-containing acireductone dioxygenase (Fe-ARD) produces formate and 2-keto-4-methylthiobutyrate (KMTB), the alpha-ketoacid precursor of methionine in the methionine recycle pathway. Ni-containing acireductone dioxygenase (Ni-ARD) produces methylthiopropionate, carbon monoxide and formate, and does not lie on the methionine recycle pathway. In Yarrowia lipolytica (strain CLIB 122 / E 150) (Yeast), this protein is Acireductone dioxygenase.